The primary structure comprises 130 residues: Phosphoribosyl-AMP cyclohydrolase (130 aa).

Aspartate 77 provides a ligand contact to Mg(2+). Cysteine 78 lines the Zn(2+) pocket. Residues aspartate 79 and aspartate 81 each coordinate Mg(2+). Residues cysteine 95 and cysteine 102 each contribute to the Zn(2+) site.

The protein belongs to the PRA-CH family. As to quaternary structure, homodimer. The cofactor is Mg(2+). Zn(2+) is required as a cofactor.

The protein resides in the cytoplasm. It catalyses the reaction 1-(5-phospho-beta-D-ribosyl)-5'-AMP + H2O = 1-(5-phospho-beta-D-ribosyl)-5-[(5-phospho-beta-D-ribosylamino)methylideneamino]imidazole-4-carboxamide. Its pathway is amino-acid biosynthesis; L-histidine biosynthesis; L-histidine from 5-phospho-alpha-D-ribose 1-diphosphate: step 3/9. Functionally, catalyzes the hydrolysis of the adenine ring of phosphoribosyl-AMP. In Pseudomonas syringae pv. syringae (strain B728a), this protein is Phosphoribosyl-AMP cyclohydrolase.